The primary structure comprises 1375 residues: uncharacterized protein (1375 aa).

Residues 277 to 476 (LLASGDIRGG…FGLLFLLRYS (200 aa)) enclose the Helicase ATP-binding domain. 290 to 297 (DEMGMGKT) serves as a coordination point for ATP. Residues 1092–1130 (CIICRDIIKQGFITTCGHLYCSFCLEAWLKHSSSCPMCK) form an RING-type zinc finger. Residues 1190–1336 (TISKHLLYLK…QLDKLGLDVP (147 aa)) form the Helicase C-terminal domain.

Belongs to the SNF2/RAD54 helicase family.

It is found in the nucleus. This is an uncharacterized protein from Schizosaccharomyces pombe (strain 972 / ATCC 24843) (Fission yeast).